The primary structure comprises 62 residues: Large ribosomal subunit protein uL29 (62 aa).

The protein belongs to the universal ribosomal protein uL29 family.

The protein is Large ribosomal subunit protein uL29 of Geotalea daltonii (strain DSM 22248 / JCM 15807 / FRC-32) (Geobacter daltonii).